The chain runs to 260 residues: 3'-5' ssDNA/RNA exonuclease TatD (260 aa).

The a divalent metal cation site is built by E91, H127, and H152.

The protein belongs to the metallo-dependent hydrolases superfamily. TatD-type hydrolase family. TatD subfamily. In terms of assembly, monomer. Mg(2+) is required as a cofactor.

It localises to the cytoplasm. Its function is as follows. 3'-5' exonuclease that prefers single-stranded DNA and RNA. May play a role in the H(2)O(2)-induced DNA damage repair. The sequence is that of 3'-5' ssDNA/RNA exonuclease TatD from Salmonella typhimurium (strain LT2 / SGSC1412 / ATCC 700720).